We begin with the raw amino-acid sequence, 1183 residues long: ATP-dependent helicase/nuclease subunit A (1183 aa).

The region spanning 3-461 (VQWTDEQQRA…IDLTKNFRSR (459 aa)) is the UvrD-like helicase ATP-binding domain. 24–31 (AAAGSGKT) lines the ATP pocket. Positions 473–769 (RQVMDEAVGE…RIMTIHQSKG (297 aa)) constitute a UvrD-like helicase C-terminal domain.

This sequence belongs to the helicase family. AddA subfamily. As to quaternary structure, heterodimer of AddA and AddB/RexB. Mg(2+) serves as cofactor.

The enzyme catalyses Couples ATP hydrolysis with the unwinding of duplex DNA by translocating in the 3'-5' direction.. The catalysed reaction is ATP + H2O = ADP + phosphate + H(+). In terms of biological role, the heterodimer acts as both an ATP-dependent DNA helicase and an ATP-dependent, dual-direction single-stranded exonuclease. Recognizes the chi site generating a DNA molecule suitable for the initiation of homologous recombination. The AddA nuclease domain is required for chi fragment generation; this subunit has the helicase and 3' -&gt; 5' nuclease activities. The polypeptide is ATP-dependent helicase/nuclease subunit A (Exiguobacterium sibiricum (strain DSM 17290 / CCUG 55495 / CIP 109462 / JCM 13490 / 255-15)).